The following is a 290-amino-acid chain: Arylamine N-acetyltransferase 1 (290 aa).

M1 bears the N-acetylmethionine mark. The active-site Acyl-thioester intermediate is C68. S103 contacts CoA. 106 to 107 lines the substrate pocket; sequence VH. Residues H107 and D122 contribute to the active site. A CoA-binding site is contributed by Y208.

Belongs to the arylamine N-acetyltransferase family.

It localises to the cytoplasm. The catalysed reaction is an arylamine + acetyl-CoA = an N-acetylarylamine + CoA. In terms of biological role, participates in the detoxification of a plethora of hydrazine and arylamine drugs. Acetylates both arylamines and arylalkylamines. This chain is Arylamine N-acetyltransferase 1 (Nat1), found in Rattus norvegicus (Rat).